A 373-amino-acid polypeptide reads, in one-letter code: Chaperone protein DnaJ (373 aa).

Residues 4 to 68 (DFYEILGVSR…QARANYDRFG (65 aa)) enclose the J domain. The CR-type zinc finger occupies 132–214 (GGEKEIRINH…CGGQGHIQVS (83 aa)). Positions 145, 148, 162, 165, 188, 191, 202, and 205 each coordinate Zn(2+). CXXCXGXG motif repeat units lie at residues 145-152 (CKTCQGTG), 162-169 (CSTCGGVG), 188-195 (CPTCGGSG), and 202-209 (CESCGGQG).

The protein belongs to the DnaJ family. As to quaternary structure, homodimer. The cofactor is Zn(2+).

The protein resides in the cytoplasm. Its function is as follows. Participates actively in the response to hyperosmotic and heat shock by preventing the aggregation of stress-denatured proteins and by disaggregating proteins, also in an autonomous, DnaK-independent fashion. Unfolded proteins bind initially to DnaJ; upon interaction with the DnaJ-bound protein, DnaK hydrolyzes its bound ATP, resulting in the formation of a stable complex. GrpE releases ADP from DnaK; ATP binding to DnaK triggers the release of the substrate protein, thus completing the reaction cycle. Several rounds of ATP-dependent interactions between DnaJ, DnaK and GrpE are required for fully efficient folding. Also involved, together with DnaK and GrpE, in the DNA replication of plasmids through activation of initiation proteins. In Thermosynechococcus vestitus (strain NIES-2133 / IAM M-273 / BP-1), this protein is Chaperone protein DnaJ.